Consider the following 270-residue polypeptide: tRNA pseudouridine synthase A (270 aa).

Residue aspartate 60 is the Nucleophile of the active site. The RNA binding stretch occupies residues 107–111 (FHARF). Residue tyrosine 118 coordinates substrate. An interaction with tRNA region spans residues 168-172 (QCQSR).

The protein belongs to the tRNA pseudouridine synthase TruA family. In terms of assembly, homodimer.

It catalyses the reaction uridine(38/39/40) in tRNA = pseudouridine(38/39/40) in tRNA. In terms of biological role, formation of pseudouridine at positions 38, 39 and 40 in the anticodon stem and loop of transfer RNAs. The polypeptide is tRNA pseudouridine synthase A (Escherichia coli O139:H28 (strain E24377A / ETEC)).